The following is a 701-amino-acid chain: Elongation factor G 2 (701 aa).

The 284-residue stretch at 8–291 (ERYRNIGISA…AVIDYLPSPA (284 aa)) folds into the tr-type G domain. GTP is bound by residues 17-24 (AHIDAGKT), 88-92 (DTPGH), and 142-145 (NKMD).

This sequence belongs to the TRAFAC class translation factor GTPase superfamily. Classic translation factor GTPase family. EF-G/EF-2 subfamily.

It is found in the cytoplasm. In terms of biological role, catalyzes the GTP-dependent ribosomal translocation step during translation elongation. During this step, the ribosome changes from the pre-translocational (PRE) to the post-translocational (POST) state as the newly formed A-site-bound peptidyl-tRNA and P-site-bound deacylated tRNA move to the P and E sites, respectively. Catalyzes the coordinated movement of the two tRNA molecules, the mRNA and conformational changes in the ribosome. This Burkholderia lata (strain ATCC 17760 / DSM 23089 / LMG 22485 / NCIMB 9086 / R18194 / 383) protein is Elongation factor G 2.